The sequence spans 417 residues: Gamma-glutamyl phosphate reductase (417 aa).

It belongs to the gamma-glutamyl phosphate reductase family.

It is found in the cytoplasm. The enzyme catalyses L-glutamate 5-semialdehyde + phosphate + NADP(+) = L-glutamyl 5-phosphate + NADPH + H(+). It functions in the pathway amino-acid biosynthesis; L-proline biosynthesis; L-glutamate 5-semialdehyde from L-glutamate: step 2/2. In terms of biological role, catalyzes the NADPH-dependent reduction of L-glutamate 5-phosphate into L-glutamate 5-semialdehyde and phosphate. The product spontaneously undergoes cyclization to form 1-pyrroline-5-carboxylate. The protein is Gamma-glutamyl phosphate reductase of Desulfitobacterium hafniense (strain Y51).